The following is a 123-amino-acid chain: Small ribosomal subunit protein uS12 (123 aa).

The residue at position 89 (Asp-89) is a 3-methylthioaspartic acid.

The protein belongs to the universal ribosomal protein uS12 family. Part of the 30S ribosomal subunit. Contacts proteins S8 and S17. May interact with IF1 in the 30S initiation complex.

Functionally, with S4 and S5 plays an important role in translational accuracy. In terms of biological role, interacts with and stabilizes bases of the 16S rRNA that are involved in tRNA selection in the A site and with the mRNA backbone. Located at the interface of the 30S and 50S subunits, it traverses the body of the 30S subunit contacting proteins on the other side and probably holding the rRNA structure together. The combined cluster of proteins S8, S12 and S17 appears to hold together the shoulder and platform of the 30S subunit. The protein is Small ribosomal subunit protein uS12 of Nitrobacter hamburgensis (strain DSM 10229 / NCIMB 13809 / X14).